The primary structure comprises 308 residues: Spermidine synthase 1 (308 aa).

The PABS domain occupies 17–254 (PGWFSEISPL…GVIGFMLCST (238 aa)). Q48 serves as a coordination point for S-adenosyl 3-(methylsulfanyl)propylamine. A putrescine-binding site is contributed by Y78. S-adenosyl 3-(methylsulfanyl)propylamine contacts are provided by residues Q79, D103, E123, 154–155 (DG), and D173. D173 serves as the catalytic Proton acceptor. Putrescine-binding positions include 173–176 (DSSD) and Y242.

This sequence belongs to the spermidine/spermine synthase family.

It carries out the reaction S-adenosyl 3-(methylsulfanyl)propylamine + putrescine = S-methyl-5'-thioadenosine + spermidine + H(+). The protein operates within amine and polyamine biosynthesis; spermidine biosynthesis; spermidine from putrescine: step 1/1. The sequence is that of Spermidine synthase 1 from Datura stramonium (Jimsonweed).